Consider the following 749-residue polypeptide: 1,4-alpha-glucan branching enzyme GlgB (749 aa).

Catalysis depends on D427, which acts as the Nucleophile. The active-site Proton donor is the E480.

It belongs to the glycosyl hydrolase 13 family. GlgB subfamily. As to quaternary structure, monomer.

It carries out the reaction Transfers a segment of a (1-&gt;4)-alpha-D-glucan chain to a primary hydroxy group in a similar glucan chain.. Its pathway is glycan biosynthesis; glycogen biosynthesis. Catalyzes the formation of the alpha-1,6-glucosidic linkages in glycogen by scission of a 1,4-alpha-linked oligosaccharide from growing alpha-1,4-glucan chains and the subsequent attachment of the oligosaccharide to the alpha-1,6 position. This chain is 1,4-alpha-glucan branching enzyme GlgB, found in Thermobifida fusca (strain YX).